Here is a 326-residue protein sequence, read N- to C-terminus: Biotin synthase (326 aa).

The Radical SAM core domain occupies 51 to 278 (NEVQRSTLLS…TSYVRLSAGR (228 aa)). 3 residues coordinate [4Fe-4S] cluster: Cys66, Cys70, and Cys73. [2Fe-2S] cluster-binding residues include Cys110, Cys141, Cys201, and Arg273.

This sequence belongs to the radical SAM superfamily. Biotin synthase family. As to quaternary structure, homodimer. [4Fe-4S] cluster serves as cofactor. The cofactor is [2Fe-2S] cluster.

It catalyses the reaction (4R,5S)-dethiobiotin + (sulfur carrier)-SH + 2 reduced [2Fe-2S]-[ferredoxin] + 2 S-adenosyl-L-methionine = (sulfur carrier)-H + biotin + 2 5'-deoxyadenosine + 2 L-methionine + 2 oxidized [2Fe-2S]-[ferredoxin]. It participates in cofactor biosynthesis; biotin biosynthesis; biotin from 7,8-diaminononanoate: step 2/2. Catalyzes the conversion of dethiobiotin (DTB) to biotin by the insertion of a sulfur atom into dethiobiotin via a radical-based mechanism. This Azoarcus sp. (strain BH72) protein is Biotin synthase.